We begin with the raw amino-acid sequence, 569 residues long: Sulfite reductase [NADPH] hemoprotein beta-component (569 aa).

Cysteine 433, cysteine 439, cysteine 478, and cysteine 482 together coordinate [4Fe-4S] cluster. Cysteine 482 is a siroheme binding site.

It belongs to the nitrite and sulfite reductase 4Fe-4S domain family. Alpha(8)-beta(8). The alpha component is a flavoprotein, the beta component is a hemoprotein. Requires siroheme as cofactor. [4Fe-4S] cluster is required as a cofactor.

The catalysed reaction is hydrogen sulfide + 3 NADP(+) + 3 H2O = sulfite + 3 NADPH + 4 H(+). The protein operates within sulfur metabolism; hydrogen sulfide biosynthesis; hydrogen sulfide from sulfite (NADPH route): step 1/1. Its function is as follows. Component of the sulfite reductase complex that catalyzes the 6-electron reduction of sulfite to sulfide. This is one of several activities required for the biosynthesis of L-cysteine from sulfate. This chain is Sulfite reductase [NADPH] hemoprotein beta-component, found in Blochmanniella floridana.